The primary structure comprises 185 residues: Urease accessory protein UreE (185 aa).

Residues 153-185 form a disordered region; sequence LRANSAQGHGHSHSHSHDHHGYHHHGDGNWHKH. A compositionally biased stretch (basic residues) spans 162 to 175; the sequence is GHSHSHSHDHHGYH. The span at 176–185 shows a compositional bias: basic and acidic residues; that stretch reads HHGDGNWHKH.

The protein belongs to the UreE family.

Its subcellular location is the cytoplasm. Involved in urease metallocenter assembly. Binds nickel. Probably functions as a nickel donor during metallocenter assembly. In Haemophilus influenzae (strain PittGG), this protein is Urease accessory protein UreE.